Reading from the N-terminus, the 346-residue chain is UDP-N-acetylenolpyruvoylglucosamine reductase (346 aa).

Residues 18 to 189 (LRAQARAFIA…VSVVFALKTH (172 aa)) form the FAD-binding PCMH-type domain. The active site involves Arg-165. The active-site Proton donor is Ser-240. Glu-336 is a catalytic residue.

The protein belongs to the MurB family. It depends on FAD as a cofactor.

It is found in the cytoplasm. The enzyme catalyses UDP-N-acetyl-alpha-D-muramate + NADP(+) = UDP-N-acetyl-3-O-(1-carboxyvinyl)-alpha-D-glucosamine + NADPH + H(+). The protein operates within cell wall biogenesis; peptidoglycan biosynthesis. Cell wall formation. The chain is UDP-N-acetylenolpyruvoylglucosamine reductase from Neisseria meningitidis serogroup A / serotype 4A (strain DSM 15465 / Z2491).